We begin with the raw amino-acid sequence, 370 residues long: 4-hydroxy-3-methylbut-2-en-1-yl diphosphate synthase (flavodoxin) (370 aa).

[4Fe-4S] cluster is bound by residues Cys-270, Cys-273, Cys-305, and Glu-312.

Belongs to the IspG family. [4Fe-4S] cluster is required as a cofactor.

The enzyme catalyses (2E)-4-hydroxy-3-methylbut-2-enyl diphosphate + oxidized [flavodoxin] + H2O + 2 H(+) = 2-C-methyl-D-erythritol 2,4-cyclic diphosphate + reduced [flavodoxin]. It functions in the pathway isoprenoid biosynthesis; isopentenyl diphosphate biosynthesis via DXP pathway; isopentenyl diphosphate from 1-deoxy-D-xylulose 5-phosphate: step 5/6. In terms of biological role, converts 2C-methyl-D-erythritol 2,4-cyclodiphosphate (ME-2,4cPP) into 1-hydroxy-2-methyl-2-(E)-butenyl 4-diphosphate. The chain is 4-hydroxy-3-methylbut-2-en-1-yl diphosphate synthase (flavodoxin) from Ectopseudomonas mendocina (strain ymp) (Pseudomonas mendocina).